The chain runs to 416 residues: Tyrosine--tRNA ligase (416 aa).

The short motif at 55-64 (PTGSEIHLGH) is the 'HIGH' region element. Residues 249–253 (KMSKS) carry the 'KMSKS' region motif. An ATP-binding site is contributed by Lys252. Positions 352–416 (TKAFHLLSSI…GKKTFRRISN (65 aa)) constitute an S4 RNA-binding domain.

It belongs to the class-I aminoacyl-tRNA synthetase family. TyrS type 2 subfamily. As to quaternary structure, homodimer.

It localises to the cytoplasm. The enzyme catalyses tRNA(Tyr) + L-tyrosine + ATP = L-tyrosyl-tRNA(Tyr) + AMP + diphosphate + H(+). In terms of biological role, catalyzes the attachment of tyrosine to tRNA(Tyr) in a two-step reaction: tyrosine is first activated by ATP to form Tyr-AMP and then transferred to the acceptor end of tRNA(Tyr). In Prochlorococcus marinus (strain SARG / CCMP1375 / SS120), this protein is Tyrosine--tRNA ligase.